The sequence spans 119 residues: Large ribosomal subunit protein uL18 (119 aa).

Belongs to the universal ribosomal protein uL18 family. In terms of assembly, part of the 50S ribosomal subunit; part of the 5S rRNA/L5/L18/L25 subcomplex. Contacts the 5S and 23S rRNAs.

Functionally, this is one of the proteins that bind and probably mediate the attachment of the 5S RNA into the large ribosomal subunit, where it forms part of the central protuberance. In Paracoccus denitrificans (strain Pd 1222), this protein is Large ribosomal subunit protein uL18.